The chain runs to 517 residues: Bifunctional purine biosynthesis protein PurH (517 aa).

Residues 1–146 (MAPIALLSVS…KNHAHVAVLT (146 aa)) enclose the MGS-like domain.

This sequence belongs to the PurH family.

The catalysed reaction is (6R)-10-formyltetrahydrofolate + 5-amino-1-(5-phospho-beta-D-ribosyl)imidazole-4-carboxamide = 5-formamido-1-(5-phospho-D-ribosyl)imidazole-4-carboxamide + (6S)-5,6,7,8-tetrahydrofolate. It catalyses the reaction IMP + H2O = 5-formamido-1-(5-phospho-D-ribosyl)imidazole-4-carboxamide. It functions in the pathway purine metabolism; IMP biosynthesis via de novo pathway; 5-formamido-1-(5-phospho-D-ribosyl)imidazole-4-carboxamide from 5-amino-1-(5-phospho-D-ribosyl)imidazole-4-carboxamide (10-formyl THF route): step 1/1. It participates in purine metabolism; IMP biosynthesis via de novo pathway; IMP from 5-formamido-1-(5-phospho-D-ribosyl)imidazole-4-carboxamide: step 1/1. This Prochlorococcus marinus (strain MIT 9313) protein is Bifunctional purine biosynthesis protein PurH.